The chain runs to 254 residues: MINLGSYNLLRHEKDSFLEIIRRIKDGDNLLRNKFIDDFKPFILKCVSQLVGKKNDLTQSDEYSIALIAFNEAIESYDLDKKTKFVSFSKQVIKRRLIDYLRSTKKNNVAVPFSYFNDCNSSFNDSSTGNFEEKFLYDRNSDYSIDFEAREEIKNLELKICEYKMTIEDLIECSPKHRDTIILCLNVANIIIEDESLYQMFNKRKTLPYKELTERFNLCRRTLEKNRKFITAMVLILKSDLEVLKKYIYDTLGR.

The short motif at 61 to 74 (DEYSIALIAFNEAI) is the Polymerase core binding element. Positions 209-228 (YKELTERFNLCRRTLEKNRK) form a DNA-binding region, H-T-H motif.

This sequence belongs to the sigma-70 factor family. SigI subfamily. As to quaternary structure, interacts with RsgI8.

The protein resides in the cytoplasm. Its activity is regulated as follows. Negatively regulated by the anti-sigma-I factor RsgI8. In terms of biological role, sigma factors are initiation factors that promote the attachment of RNA polymerase to specific initiation sites and are then released. This is RNA polymerase sigma factor SigI8 from Acetivibrio thermocellus (strain ATCC 27405 / DSM 1237 / JCM 9322 / NBRC 103400 / NCIMB 10682 / NRRL B-4536 / VPI 7372) (Clostridium thermocellum).